A 101-amino-acid chain; its full sequence is Large ribosomal subunit protein uL24 (101 aa).

The protein belongs to the universal ribosomal protein uL24 family. In terms of assembly, part of the 50S ribosomal subunit.

Its function is as follows. One of two assembly initiator proteins, it binds directly to the 5'-end of the 23S rRNA, where it nucleates assembly of the 50S subunit. One of the proteins that surrounds the polypeptide exit tunnel on the outside of the subunit. In Borreliella afzelii (strain PKo) (Borrelia afzelii), this protein is Large ribosomal subunit protein uL24.